The primary structure comprises 117 residues: Colipase (117 aa).

An N-terminal signal peptide occupies residues 1 to 22 (MNIFNILLPIVVLLLVFGLTAA). 5 cysteine pairs are disulfide-bonded: C39–C50, C45–C61, C49–C83, C71–C91, and C85–C109.

It belongs to the colipase family. In terms of assembly, forms a 1:1 stoichiometric complex with pancreatic lipase.

The protein localises to the secreted. Its function is as follows. Colipase is a cofactor of pancreatic lipase. It allows the lipase to anchor itself to the lipid-water interface. Without colipase the enzyme is washed off by bile salts, which have an inhibitory effect on the lipase. This chain is Colipase (clps), found in Xenopus tropicalis (Western clawed frog).